The primary structure comprises 249 residues: Transcription initiation factor TFIID subunit 9B (249 aa).

Met1 bears the N-acetylmethionine mark. Ser147 is subject to Phosphoserine. The interval 148 to 171 (AVSSRPTTPPVAPPQAVSGPNKAA) is disordered. Thr172 is subject to Phosphothreonine. At Ser175 the chain carries Phosphoserine. A compositionally biased stretch (polar residues) spans 224-234 (VSSQNTATDSN). The segment at 224–249 (VSSQNTATDSNPLKRKHDDDDDNDTM) is disordered.

The protein belongs to the TAF9 family. As to quaternary structure, binds TAF5 and TAF6. Component of TFIID and the TATA-binding protein-free TAF complex (TFTC). TFIID is composed of TATA binding protein (TBP) and a number of TBP-associated factors (TAFs). Binds N-terminal domain of p53/TP53 which is essential for transcription.

It localises to the nucleus. Essential for cell viability. TAF9 and TAF9B are involved in transcriptional activation as well as repression of distinct but overlapping sets of genes. May have a role in gene regulation associated with apoptosis. TAFs are components of the transcription factor IID (TFIID) complex, the TBP-free TAFII complex (TFTC), the PCAF histone acetylase complex and the STAGA transcription coactivator-HAT complex. TFIID or TFTC are essential for the regulation of RNA polymerase II-mediated transcription. In Mus musculus (Mouse), this protein is Transcription initiation factor TFIID subunit 9B (Taf9b).